Here is a 174-residue protein sequence, read N- to C-terminus: Large ribosomal subunit protein uL18 (174 aa).

It belongs to the universal ribosomal protein uL18 family. Part of the 50S ribosomal subunit. Contacts the 5S and 23S rRNAs.

This is one of the proteins that bind and probably mediate the attachment of the 5S RNA into the large ribosomal subunit, where it forms part of the central protuberance. The sequence is that of Large ribosomal subunit protein uL18 from Methanosarcina barkeri (strain Fusaro / DSM 804).